The chain runs to 207 residues: Putative transcriptional regulator (207 aa).

One can recognise a Response regulatory domain in the interval 3-118 (KVLIVDDHPA…ELLLAAKAVL (116 aa)). Asp-9 and Asp-53 each carry 4-aspartylphosphate. The HTH luxR-type domain maps to 140–205 (EARMLESLSD…GLIDFARRHE (66 aa)). Residues 155-174 (LQYLANGNTNKAIAQQLFLS) constitute a DNA-binding region (H-T-H motif).

Functionally, probable transcriptional regulator. This is Putative transcriptional regulator from Pseudomonas aeruginosa (strain ATCC 15692 / DSM 22644 / CIP 104116 / JCM 14847 / LMG 12228 / 1C / PRS 101 / PAO1).